We begin with the raw amino-acid sequence, 205 residues long: Small ribosomal subunit protein uS4 (205 aa).

The disordered stretch occupies residues 18 to 46 (NIWGRPKSPVNRREYGPGQHGQRRKGKLS). Positions 94-154 (RRLDAVVYRA…EASKQLAHVL (61 aa)) constitute an S4 RNA-binding domain.

It belongs to the universal ribosomal protein uS4 family. Part of the 30S ribosomal subunit. Contacts protein S5. The interaction surface between S4 and S5 is involved in control of translational fidelity.

In terms of biological role, one of the primary rRNA binding proteins, it binds directly to 16S rRNA where it nucleates assembly of the body of the 30S subunit. With S5 and S12 plays an important role in translational accuracy. This is Small ribosomal subunit protein uS4 from Bradyrhizobium diazoefficiens (strain JCM 10833 / BCRC 13528 / IAM 13628 / NBRC 14792 / USDA 110).